Consider the following 240-residue polypeptide: MGNAPQRPILITGGGRRIGLALAHHFLTLRQPVIVSYRNEYPSIEGLRQAGATCIQADFSTDEGILRFAETVKSNTRGLRAIIHNASAWQAEKPGTPLSETLACMMQIHVHAPYLLNHALEELLRGHGHAAGDIIHFTDYVVERGSDKHIAYAASKAALDNMTRSFARKLAPEVKVNAIAPSLILFNEEDDAEYRQKALNKSLMKIVPGEKEVIDLIDYLLTSCYVTGRSFGVDGGRPLN.

The Proton acceptor role is filled by Tyr-152.

This sequence belongs to the short-chain dehydrogenases/reductases (SDR) family. FolM subfamily.

The catalysed reaction is (6S)-5,6,7,8-tetrahydrofolate + NADP(+) = 7,8-dihydrofolate + NADPH + H(+). It catalyses the reaction 7,8-dihydromonapterin + NADPH + H(+) = 5,6,7,8-tetrahydromonapterin + NADP(+). Catalyzes the reduction of dihydromonapterin to tetrahydromonapterin. Also has lower activity with dihydrofolate. The protein is Dihydromonapterin reductase (folM) of Enterobacter sp. (strain 638).